The primary structure comprises 463 residues: Paraneoplastic antigen Ma3 (463 aa).

The interval 363–410 (VGAVPLPASGNSFDARPSQGYRRRRGRGQHRRGGVARAGSRGSRKRKR) is disordered. Over residues 383-396 (YRRRRGRGQHRRGG) the composition is skewed to basic residues. The CCHC-type zinc finger occupies 412–429 (TFCYSCGEDGHIRVQCIN). The disordered stretch occupies residues 440–463 (KQAAVESGNGNWAWDKSHPKSKAK).

The protein belongs to the PNMA family. Expressed at high levels in the brain and testis. Expressed at lower levels in the heart, trachea and kidney.

The protein resides in the nucleus. It is found in the nucleolus. The chain is Paraneoplastic antigen Ma3 (PNMA3) from Homo sapiens (Human).